We begin with the raw amino-acid sequence, 123 residues long: Small ribosomal subunit protein uS12 (123 aa).

Asp-89 bears the 3-methylthioaspartic acid mark.

The protein belongs to the universal ribosomal protein uS12 family. As to quaternary structure, part of the 30S ribosomal subunit. Contacts proteins S8 and S17. May interact with IF1 in the 30S initiation complex.

With S4 and S5 plays an important role in translational accuracy. In terms of biological role, interacts with and stabilizes bases of the 16S rRNA that are involved in tRNA selection in the A site and with the mRNA backbone. Located at the interface of the 30S and 50S subunits, it traverses the body of the 30S subunit contacting proteins on the other side and probably holding the rRNA structure together. The combined cluster of proteins S8, S12 and S17 appears to hold together the shoulder and platform of the 30S subunit. The sequence is that of Small ribosomal subunit protein uS12 from Rhodospirillum centenum (strain ATCC 51521 / SW).